Consider the following 639-residue polypeptide: Chaperone protein DnaK (639 aa).

T198 bears the Phosphothreonine; by autocatalysis mark. A disordered region spans residues 597 to 639; the sequence is AYSAGQSAEGAPHAAGAEASAQSRTDDGVVDADFEEVDEKKGH. Residues 603–617 show a composition bias toward low complexity; the sequence is SAEGAPHAAGAEASA. Over residues 624-633 the composition is skewed to acidic residues; that stretch reads GVVDADFEEV.

Belongs to the heat shock protein 70 family.

Its function is as follows. Acts as a chaperone. In Rhodospirillum rubrum (strain ATCC 11170 / ATH 1.1.1 / DSM 467 / LMG 4362 / NCIMB 8255 / S1), this protein is Chaperone protein DnaK.